The sequence spans 209 residues: V-type ATP synthase subunit D (209 aa).

The protein belongs to the V-ATPase D subunit family.

In terms of biological role, produces ATP from ADP in the presence of a proton gradient across the membrane. In Anaeromyxobacter dehalogenans (strain 2CP-1 / ATCC BAA-258), this protein is V-type ATP synthase subunit D.